Here is a 505-residue protein sequence, read N- to C-terminus: Cytochrome P450 76A2 (505 aa).

Cysteine 448 provides a ligand contact to heme.

It belongs to the cytochrome P450 family. The cofactor is heme.

The chain is Cytochrome P450 76A2 (CYP76A2) from Solanum melongena (Eggplant).